The sequence spans 826 residues: Ribonucleoside-diphosphate reductase large subunit (826 aa).

Substrate contacts are provided by residues T171, 186 to 187, G217, 387 to 391, and 594 to 598; these read SC, NLCAE, and PTSGC. C187 and C403 are joined by a disulfide. The Proton acceptor role is filled by N387. Residue C389 is the Cysteine radical intermediate of the active site. E391 acts as the Proton acceptor in catalysis. Residues 747-769 form a disordered region; that stretch reads SVPREEQNERSPAEQMPPRPMEP. The segment covering 749 to 758 has biased composition (basic and acidic residues); that stretch reads PREEQNERSP.

Belongs to the ribonucleoside diphosphate reductase large chain family. In terms of assembly, heterotetramer composed of a homodimer of the large subunit (R1) and a homodimer of the small subunit (R2). Larger multisubunit protein complex are also active, composed of (R1)n(R2)n.

It catalyses the reaction a 2'-deoxyribonucleoside 5'-diphosphate + [thioredoxin]-disulfide + H2O = a ribonucleoside 5'-diphosphate + [thioredoxin]-dithiol. Functionally, ribonucleoside-diphosphate reductase holoenzyme provides the precursors necessary for viral DNA synthesis. Allows virus growth in non-dividing cells, as well as reactivation from latency in infected hosts. Catalyzes the biosynthesis of deoxyribonucleotides from the corresponding ribonucleotides. The sequence is that of Ribonucleoside-diphosphate reductase large subunit from Homo sapiens (Human).